The primary structure comprises 708 residues: Polyribonucleotide nucleotidyltransferase (708 aa).

Asp486 and Asp492 together coordinate Mg(2+). One can recognise a KH domain in the interval 553–612 (PRITTIKVPPQKVREVIGSGGKVIREITEVTGTKIDIEDDGTIKIASADAEATQRAVDWI). In terms of domain architecture, S1 motif spans 622-690 (GVVYTGKVVK…DRGKIKLSMK (69 aa)).

Belongs to the polyribonucleotide nucleotidyltransferase family. The cofactor is Mg(2+).

The protein localises to the cytoplasm. It catalyses the reaction RNA(n+1) + phosphate = RNA(n) + a ribonucleoside 5'-diphosphate. In terms of biological role, involved in mRNA degradation. Catalyzes the phosphorolysis of single-stranded polyribonucleotides processively in the 3'- to 5'-direction. The chain is Polyribonucleotide nucleotidyltransferase from Rhodospirillum rubrum (strain ATCC 11170 / ATH 1.1.1 / DSM 467 / LMG 4362 / NCIMB 8255 / S1).